The chain runs to 81 residues: uncharacterized protein (81 aa).

This is an uncharacterized protein from Bacillus subtilis (strain 168).